Reading from the N-terminus, the 438-residue chain is Probable glucose-6-phosphate isomerase (438 aa).

Glutamate 280 functions as the Proton donor in the catalytic mechanism. Residues histidine 301 and lysine 410 contribute to the active site.

Belongs to the GPI family.

It localises to the cytoplasm. It carries out the reaction alpha-D-glucose 6-phosphate = beta-D-fructose 6-phosphate. It participates in carbohydrate biosynthesis; gluconeogenesis. It functions in the pathway carbohydrate degradation; glycolysis; D-glyceraldehyde 3-phosphate and glycerone phosphate from D-glucose: step 2/4. In terms of biological role, catalyzes the reversible isomerization of glucose-6-phosphate to fructose-6-phosphate. This is Probable glucose-6-phosphate isomerase from Methanococcus maripaludis (strain DSM 14266 / JCM 13030 / NBRC 101832 / S2 / LL).